A 493-amino-acid chain; its full sequence is DM7 family protein GM11958 (493 aa).

The segment at 434–493 (ATKSTDTRDDGMNTADYQSQFPELEQDSEPEPEPEPEPQTEDEGEDEDIEILASLCSGSI) is disordered. Residues 457–483 (LEQDSEPEPEPEPEPQTEDEGEDEDIE) are compositionally biased toward acidic residues.

This sequence belongs to the DM7 family.

The protein is DM7 family protein GM11958 of Drosophila sechellia (Fruit fly).